Here is a 278-residue protein sequence, read N- to C-terminus: Large ribosomal subunit protein uL2 (278 aa).

Disordered stretches follow at residues 33–53 and 219–278; these read LTEG…TSRG and LTRG…KKKR. Residues 269-278 are compositionally biased toward basic residues; sequence IRSRHAKKKR.

Belongs to the universal ribosomal protein uL2 family. In terms of assembly, part of the 50S ribosomal subunit. Forms a bridge to the 30S subunit in the 70S ribosome.

Functionally, one of the primary rRNA binding proteins. Required for association of the 30S and 50S subunits to form the 70S ribosome, for tRNA binding and peptide bond formation. It has been suggested to have peptidyltransferase activity; this is somewhat controversial. Makes several contacts with the 16S rRNA in the 70S ribosome. The sequence is that of Large ribosomal subunit protein uL2 from Sphingopyxis alaskensis (strain DSM 13593 / LMG 18877 / RB2256) (Sphingomonas alaskensis).